The following is a 367-amino-acid chain: C-C chemokine receptor type 9 (367 aa).

The Extracellular segment spans residues 1–46 (MVPTEATSLILNPSDDYGYDGTPPMEYDTNLTDYFCEKSHVRQFAG). Residue asparagine 30 is glycosylated (N-linked (GlcNAc...) asparagine). 2 disulfides stabilise this stretch: cysteine 36-cysteine 287 and cysteine 117-cysteine 196. The helical transmembrane segment at 47 to 72 (HFLPPLYWLVFIVGAVGNSLVILVYW) threads the bilayer. Residues 73–83 (YCTRVKTMTDM) lie on the Cytoplasmic side of the membrane. A helical membrane pass occupies residues 84–107 (FLLNLAIADLLFLTTLPFWAIAAA). Over 108–118 (DQWKFQTFMCK) the chain is Extracellular. Residues 119-148 (VVNSMYKMNFYSCVLLIMCISVDRYIAIAQ) form a helical membrane-spanning segment. At 149–157 (AMRAQMWRQ) the chain is on the cytoplasmic side. A helical transmembrane segment spans residues 158 to 183 (KRLLYSKMVCFTIWVMAAALCLPELL). Over 184 to 206 (YSQVKEEHGTAICTVVYSSNEST) the chain is Extracellular. An N-linked (GlcNAc...) asparagine glycan is attached at asparagine 203. Residues 207–241 (KLKSAVLTLKVTLGFFLPFVVMACCYAIIIHTLIR) form a helical membrane-spanning segment. Topologically, residues 242–246 (AKKSS) are cytoplasmic. The chain crosses the membrane as a helical span at residues 247–281 (KHKALKVTITVLTVFVLSQFPHNCVLLVQTIDAYA). Residues 282-288 (TFISSCA) lie on the Extracellular side of the membrane. Residues 289–319 (LSIKIDICFQVTQTVAFFHSCLNPVLYVFVG) traverse the membrane as a helical segment. Over 320–367 (ERFRRDLVKTLKNLGCISQAQWVSFTRREGSLKLSSMLLETTSGALSF) the chain is Cytoplasmic.

The protein belongs to the G-protein coupled receptor 1 family.

The protein resides in the cell membrane. Receptor for chemokine SCYA25/TECK. Subsequently transduces a signal by increasing the intracellular calcium ions level. The sequence is that of C-C chemokine receptor type 9 (CCR9) from Ovis aries (Sheep).